Consider the following 196-residue polypeptide: Ribosome maturation factor RimP (196 aa).

The disordered stretch occupies residues 164-196; the sequence is LAPQKPNKPGPKKPGHEKKKPSNESAAGKPRAE. The span at 173 to 182 shows a compositional bias: basic residues; that stretch reads GPKKPGHEKK.

This sequence belongs to the RimP family.

It localises to the cytoplasm. Functionally, required for maturation of 30S ribosomal subunits. This is Ribosome maturation factor RimP from Xanthomonas axonopodis pv. citri (strain 306).